Reading from the N-terminus, the 332-residue chain is 2,3-diketo-L-gulonate reductase (332 aa).

The active-site Proton donor is histidine 44. NAD(+) is bound by residues 168-174 (ITMVDMS), 224-225 (WK), and 304-306 (GHE).

It belongs to the LDH2/MDH2 oxidoreductase family. DlgD subfamily. As to quaternary structure, homodimer.

The protein localises to the cytoplasm. It carries out the reaction 3-dehydro-L-gulonate + NAD(+) = 2,3-dioxo-L-gulonate + NADH + H(+). It catalyses the reaction 3-dehydro-L-gulonate + NADP(+) = 2,3-dioxo-L-gulonate + NADPH + H(+). In terms of biological role, catalyzes the reduction of 2,3-diketo-L-gulonate in the presence of NADH, to form 3-keto-L-gulonate. The protein is 2,3-diketo-L-gulonate reductase of Escherichia coli O8 (strain IAI1).